The primary structure comprises 236 residues: 2-C-methyl-D-erythritol 4-phosphate cytidylyltransferase (236 aa).

The protein belongs to the IspD/TarI cytidylyltransferase family. IspD subfamily.

It catalyses the reaction 2-C-methyl-D-erythritol 4-phosphate + CTP + H(+) = 4-CDP-2-C-methyl-D-erythritol + diphosphate. The protein operates within isoprenoid biosynthesis; isopentenyl diphosphate biosynthesis via DXP pathway; isopentenyl diphosphate from 1-deoxy-D-xylulose 5-phosphate: step 2/6. Functionally, catalyzes the formation of 4-diphosphocytidyl-2-C-methyl-D-erythritol from CTP and 2-C-methyl-D-erythritol 4-phosphate (MEP). This chain is 2-C-methyl-D-erythritol 4-phosphate cytidylyltransferase, found in Burkholderia orbicola (strain AU 1054).